The primary structure comprises 396 residues: Corticosteroid-binding globulin (396 aa).

The N-terminal stretch at 1–22 (MSLALYTCLLWLCTSGLWTAQA) is a signal peptide. Residues asparagine 88 and asparagine 216 are each glycosylated (N-linked (GlcNAc...) asparagine). Glutamine 246 lines the cortisol pocket. Asparagine 252 is a glycosylation site (N-linked (GlcNAc...) asparagine). Residue aspartate 278 coordinates cortisol. Asparagine 319 and asparagine 352 each carry an N-linked (GlcNAc...) asparagine glycan. Tryptophan 384 serves as a coordination point for cortisol.

Belongs to the serpin family. In terms of tissue distribution, expressed by the liver; secreted in plasma.

The protein resides in the secreted. Functionally, major transport protein for glucocorticoids and progestins in the blood of almost all vertebrate species. This chain is Corticosteroid-binding globulin (Serpina6), found in Rattus norvegicus (Rat).